A 168-amino-acid chain; its full sequence is Cell division inhibitor SulA (168 aa).

A ftsZ binding region spans residues 106-112; that stretch reads ALLTGNY. Residues 161-168 are lon protease binding; sequence KIHSSLYH.

It belongs to the SulA family. Interacts with FtsZ. In terms of processing, is rapidly cleaved and degraded by the Lon protease once DNA damage is repaired.

Component of the SOS system and an inhibitor of cell division. Accumulation of SulA causes rapid cessation of cell division and the appearance of long, non-septate filaments. In the presence of GTP, binds a polymerization-competent form of FtsZ in a 1:1 ratio, thus inhibiting FtsZ polymerization and therefore preventing it from participating in the assembly of the Z ring. This mechanism prevents the premature segregation of damaged DNA to daughter cells during cell division. The chain is Cell division inhibitor SulA from Yersinia enterocolitica serotype O:8 / biotype 1B (strain NCTC 13174 / 8081).